Reading from the N-terminus, the 337-residue chain is Methylthioribose-1-phosphate isomerase (337 aa).

Substrate-binding positions include 47–49 (RGA), arginine 81, and glutamine 184. Catalysis depends on aspartate 225, which acts as the Proton donor. Substrate is bound at residue 235-236 (NK).

This sequence belongs to the eIF-2B alpha/beta/delta subunits family. MtnA subfamily.

It catalyses the reaction 5-(methylsulfanyl)-alpha-D-ribose 1-phosphate = 5-(methylsulfanyl)-D-ribulose 1-phosphate. It participates in amino-acid biosynthesis; L-methionine biosynthesis via salvage pathway; L-methionine from S-methyl-5-thio-alpha-D-ribose 1-phosphate: step 1/6. Catalyzes the interconversion of methylthioribose-1-phosphate (MTR-1-P) into methylthioribulose-1-phosphate (MTRu-1-P). The protein is Methylthioribose-1-phosphate isomerase of Parasynechococcus marenigrum (strain WH8102).